Here is a 276-residue protein sequence, read N- to C-terminus: UDP-3-O-acyl-N-acetylglucosamine deacetylase (276 aa).

Zn(2+)-binding residues include histidine 76, histidine 234, and aspartate 238. The active-site Proton donor is the histidine 261.

The protein belongs to the LpxC family. The cofactor is Zn(2+).

It carries out the reaction a UDP-3-O-[(3R)-3-hydroxyacyl]-N-acetyl-alpha-D-glucosamine + H2O = a UDP-3-O-[(3R)-3-hydroxyacyl]-alpha-D-glucosamine + acetate. Its pathway is glycolipid biosynthesis; lipid IV(A) biosynthesis; lipid IV(A) from (3R)-3-hydroxytetradecanoyl-[acyl-carrier-protein] and UDP-N-acetyl-alpha-D-glucosamine: step 2/6. Its function is as follows. Catalyzes the hydrolysis of UDP-3-O-myristoyl-N-acetylglucosamine to form UDP-3-O-myristoylglucosamine and acetate, the committed step in lipid A biosynthesis. The polypeptide is UDP-3-O-acyl-N-acetylglucosamine deacetylase (Synechocystis sp. (strain ATCC 27184 / PCC 6803 / Kazusa)).